The chain runs to 411 residues: Bifunctional protein GlmU (411 aa).

A pyrophosphorylase region spans residues 1-204 (MDAVILCAGK…ENNIKGIKLN (204 aa)). Residues 6–9 (LCAG), Gln-74, and Gly-79 contribute to the UTP site. 4 residues coordinate N-acetyl-alpha-D-glucosamine 1-phosphate: Thr-80, Gly-132, Glu-144, and Asn-158. A linker region spans residues 205 to 224 (GYWNDIGKPWDLLDANTHIL). Residues 225 to 411 (KNIKTDIKGK…EEIIIKTKRK (187 aa)) form an N-acetyltransferase region. Catalysis depends on His-308, which acts as the Proton acceptor. Ala-384 and Lys-401 together coordinate acetyl-CoA.

In the N-terminal section; belongs to the N-acetylglucosamine-1-phosphate uridyltransferase family. This sequence in the C-terminal section; belongs to the transferase hexapeptide repeat family.

It catalyses the reaction N-acetyl-alpha-D-glucosamine 1-phosphate + UTP + H(+) = UDP-N-acetyl-alpha-D-glucosamine + diphosphate. The enzyme catalyses alpha-D-glucosamine 1-phosphate + acetyl-CoA = N-acetyl-alpha-D-glucosamine 1-phosphate + CoA + H(+). It functions in the pathway nucleotide-sugar biosynthesis; UDP-N-acetyl-alpha-D-glucosamine biosynthesis; N-acetyl-alpha-D-glucosamine 1-phosphate from alpha-D-glucosamine 6-phosphate (route II): step 2/2. It participates in nucleotide-sugar biosynthesis; UDP-N-acetyl-alpha-D-glucosamine biosynthesis; UDP-N-acetyl-alpha-D-glucosamine from N-acetyl-alpha-D-glucosamine 1-phosphate: step 1/1. Functionally, catalyzes the last two sequential reactions in the de novo biosynthetic pathway for UDP-N-acetyl-glucosamine (UDP-GlcNAc). Responsible for the acetylation of GlcN-1-P to GlcNAc-1-P, and for the uridyl transfer from UTP to GlcNAc-1-P, to produce UDP-GlcNAc and pyrophosphate. The chain is Bifunctional protein GlmU from Methanococcus aeolicus (strain ATCC BAA-1280 / DSM 17508 / OCM 812 / Nankai-3).